The following is a 114-amino-acid chain: T cell receptor beta variable 5-4 (114 aa).

Residues 1–21 form the signal peptide; it reads MGPGLLCWALLCLLGAGSVET. Positions 22-114 constitute an Ig-like domain; the sequence is GVTQSPTHLI…SALYLCASSL (93 aa). C42 and C110 are joined by a disulfide. N90 carries an N-linked (GlcNAc...) asparagine glycan.

In terms of assembly, alpha-beta TR is a heterodimer composed of an alpha and beta chain; disulfide-linked. The alpha-beta TR is associated with the transmembrane signaling CD3 coreceptor proteins to form the TR-CD3 (TcR or TCR). The assembly of alpha-beta TR heterodimers with CD3 occurs in the endoplasmic reticulum where a single alpha-beta TR heterodimer associates with one CD3D-CD3E heterodimer, one CD3G-CD3E heterodimer and one CD247 homodimer forming a stable octameric structure. CD3D-CD3E and CD3G-CD3E heterodimers preferentially associate with TR alpha and TR beta chains, respectively. The association of the CD247 homodimer is the last step of TcR assembly in the endoplasmic reticulum and is required for transport to the cell surface.

It localises to the cell membrane. Functionally, v region of the variable domain of T cell receptor (TR) beta chain that participates in the antigen recognition. Alpha-beta T cell receptors are antigen specific receptors which are essential to the immune response and are present on the cell surface of T lymphocytes. Recognize peptide-major histocompatibility (MH) (pMH) complexes that are displayed by antigen presenting cells (APC), a prerequisite for efficient T cell adaptive immunity against pathogens. Binding of alpha-beta TR to pMH complex initiates TR-CD3 clustering on the cell surface and intracellular activation of LCK that phosphorylates the ITAM motifs of CD3G, CD3D, CD3E and CD247 enabling the recruitment of ZAP70. In turn ZAP70 phosphorylates LAT, which recruits numerous signaling molecules to form the LAT signalosome. The LAT signalosome propagates signal branching to three major signaling pathways, the calcium, the mitogen-activated protein kinase (MAPK) kinase and the nuclear factor NF-kappa-B (NF-kB) pathways, leading to the mobilization of transcription factors that are critical for gene expression and essential for T cell growth and differentiation. The T cell repertoire is generated in the thymus, by V-(D)-J rearrangement. This repertoire is then shaped by intrathymic selection events to generate a peripheral T cell pool of self-MH restricted, non-autoaggressive T cells. Post-thymic interaction of alpha-beta TR with the pMH complexes shapes TR structural and functional avidity. In Homo sapiens (Human), this protein is T cell receptor beta variable 5-4.